Here is a 50-residue protein sequence, read N- to C-terminus: Ampulexin 2 (50 aa).

The signal sequence occupies residues 1-26 (MKAIMVLFYVMTLTIIGSFSMVSGSP).

Dimer; disulfide-linked. In terms of tissue distribution, expressed in venom sac and, to a lesser extent, in venom gland. Not expressed in brain.

The protein resides in the secreted. Functionally, amphipathic peptide which probably adopts an alpha-helical structure. Has no antimicrobial activity against E.coli DH5alpha or B.thuringiensis. Is not cytotoxic in vitro. In Ampulex compressa (Emerald cockroach wasp), this protein is Ampulexin 2.